The following is a 420-amino-acid chain: Peroxisomal biogenesis factor 3 (420 aa).

Residues 1–16 are Peroxisomal-facing; that stretch reads MPIFSSLNSFLRRHKK. The chain crosses the membrane as a helical span at residues 17-37; sequence KLIVTATLTFSAYFLVNQFII. Residues 38–420 lie on the Cytoplasmic side of the membrane; it reads KKLKNFQNSL…FSASIYSNFE (383 aa).

It belongs to the peroxin-3 family.

It is found in the peroxisome membrane. Involved in peroxisome biosynthesis. This is Peroxisomal biogenesis factor 3 (PEX3) from Debaryomyces hansenii (strain ATCC 36239 / CBS 767 / BCRC 21394 / JCM 1990 / NBRC 0083 / IGC 2968) (Yeast).